The sequence spans 715 residues: Polyphosphate kinase (715 aa).

N60 is a binding site for ATP. Mg(2+) is bound by residues R380 and R410. Catalysis depends on H440, which acts as the Phosphohistidine intermediate. The ATP site is built by Y473, R569, and H597.

This sequence belongs to the polyphosphate kinase 1 (PPK1) family. Requires Mg(2+) as cofactor. An intermediate of this reaction is the autophosphorylated ppk in which a phosphate is covalently linked to a histidine residue through a N-P bond.

It catalyses the reaction [phosphate](n) + ATP = [phosphate](n+1) + ADP. Functionally, catalyzes the reversible transfer of the terminal phosphate of ATP to form a long-chain polyphosphate (polyP). This chain is Polyphosphate kinase, found in Erythrobacter litoralis (strain HTCC2594).